The sequence spans 392 residues: MTDKVLDDISHRRYNPLNGSWLLVSPHRTKRPWQGQQEAPALNKLPEYDPQCYLCPGNKRAQGDSNPHYKNTFAFVNDYSAVKEEQQEYHPRKDAAGDGDDDIASLLLQAQPATGRCYVLTFSAKHDTTLADMSATEIVPVIETWTRIYASHLSASHPLRDAAARSLSEIPPNPDGEVEPAKKQQLRYMQIFENKGAAMGCSNPHPHCQIWTTSTLPEEPGKELAQMTKYHREHKGRHLLEDYVKVEMAKGERVVWQNDGFLVVCPWWAVWPFEVLVIAKRHVRALVELTSEERLQFAEAVQEVTRRYDNLFETNFPYSSGIHQAPLDCTEEEAETSWFHMHFYPPLLRSATVRKFLVGYELMAEPQRDITPEQAAARLRDCGGELYRKSLQ.

2 residues coordinate Zn(2+): cysteine 52 and cysteine 55. Residues alanine 61 and 77 to 78 (ND) contribute to the UDP-alpha-D-glucose site. Residue histidine 126 coordinates Zn(2+). UDP-alpha-D-glucose is bound at residue asparagine 194. Histidine 205 is a Zn(2+) binding site. Histidine 207 functions as the Tele-UMP-histidine intermediate in the catalytic mechanism. Position 209 (glutamine 209) interacts with UDP-alpha-D-glucose. Residues glutamate 223, histidine 323, histidine 340, and histidine 342 each contribute to the Fe cation site. Residues 355 to 358 (KFLV) and 360 to 361 (YE) contribute to the UDP-alpha-D-glucose site.

This sequence belongs to the galactose-1-phosphate uridylyltransferase type 1 family. In terms of assembly, homodimer. Zn(2+) is required as a cofactor.

It carries out the reaction alpha-D-galactose 1-phosphate + UDP-alpha-D-glucose = alpha-D-glucose 1-phosphate + UDP-alpha-D-galactose. It participates in carbohydrate metabolism; galactose metabolism. In Neurospora crassa (strain ATCC 24698 / 74-OR23-1A / CBS 708.71 / DSM 1257 / FGSC 987), this protein is Galactose-1-phosphate uridylyltransferase (gal-7).